The chain runs to 901 residues: Aconitate hydratase A (901 aa).

Positions 443, 509, and 512 each coordinate [4Fe-4S] cluster.

Belongs to the aconitase/IPM isomerase family. As to quaternary structure, monomer. [4Fe-4S] cluster serves as cofactor.

It catalyses the reaction citrate = D-threo-isocitrate. The enzyme catalyses (2S,3R)-3-hydroxybutane-1,2,3-tricarboxylate = 2-methyl-cis-aconitate + H2O. Its pathway is carbohydrate metabolism; tricarboxylic acid cycle; isocitrate from oxaloacetate: step 2/2. It functions in the pathway organic acid metabolism; propanoate degradation. Involved in the catabolism of short chain fatty acids (SCFA) via the tricarboxylic acid (TCA)(acetyl degradation route) and probably the 2-methylcitrate cycle I (propionate degradation route). Catalyzes the reversible isomerization of citrate to isocitrate via cis-aconitate. Could catalyze the hydration of 2-methyl-cis-aconitate to yield (2R,3S)-2-methylisocitrate. The apo form of AcnA functions as a RNA-binding regulatory protein. The chain is Aconitate hydratase A (acnA) from Staphylococcus aureus (strain MRSA252).